Here is a 599-residue protein sequence, read N- to C-terminus: MCGIIGYIGNEKASKILLKGLKRLEYRGYDSCGIATIDDTIKLKKNTGKVLEVSKKENFEDMTGFIGIGHSRWATHGGITKNNAHPHYDCSEKICIAHNGIISNYKELKELLISKGHIFKSETDTEVIPHLIEEEIKDFKEITEKTYINAIQNTIKKLNGTYALLILNQDFPEMLVGVRNESPLILGIKKDECFIGSDISAFLEYTKLAMPLNDRDIVILRKENDEIDIEVLNYGKQVQRDTIELQWDMESAEKEGYEHFMLKEIMEEPVILKNSMKISKLEIENLGKEIEKCDKIYITAMGTSLHAAMVAEYWFSGLNKLVIPIDSSEFLTKGIVDEKTLVIAITQSGETYDTMKAVKYAKEKGAKTATIVNVLGSTATREADITIMMGSGLEIAVCATKTFMSQLVILYRLFIEYGKIIGKNMDIFEKELLNIPNYISKVLDEKENISKIAEELTAKNYLFISKGINLANALEGALKFKEITYLHAEGMSSGFLKHGTISLIDENMDTVALIPPSKSELLNSVLSNVEEIKARNGKIIGISPVEDNLKYSIKVPDVIEEVSPFVYATACQLLAYYKAVDLKRDVDKPRGLAKSVTVE.

Catalysis depends on C2, which acts as the Nucleophile; for GATase activity. Positions C2 to E223 constitute a Glutamine amidotransferase type-2 domain. SIS domains are found at residues L286–K423 and I452–P589. Catalysis depends on K594, which acts as the For Fru-6P isomerization activity.

As to quaternary structure, homodimer.

The protein localises to the cytoplasm. It carries out the reaction D-fructose 6-phosphate + L-glutamine = D-glucosamine 6-phosphate + L-glutamate. Functionally, catalyzes the first step in hexosamine metabolism, converting fructose-6P into glucosamine-6P using glutamine as a nitrogen source. The chain is Glutamine--fructose-6-phosphate aminotransferase [isomerizing] (glmS) from Methanococcus maripaludis (strain DSM 14266 / JCM 13030 / NBRC 101832 / S2 / LL).